Consider the following 465-residue polypeptide: Adenosylhomocysteinase (465 aa).

Positions 56, 131, and 191 each coordinate substrate. 192-194 (TTT) lines the NAD(+) pocket. Substrate-binding residues include Lys-221 and Asp-225. NAD(+) contacts are provided by residues Asn-226, 255–260 (GYGDVG), Glu-278, Asn-313, 334–336 (IGH), and Asn-379.

This sequence belongs to the adenosylhomocysteinase family. NAD(+) serves as cofactor.

The protein localises to the cytoplasm. It catalyses the reaction S-adenosyl-L-homocysteine + H2O = L-homocysteine + adenosine. It functions in the pathway amino-acid biosynthesis; L-homocysteine biosynthesis; L-homocysteine from S-adenosyl-L-homocysteine: step 1/1. May play a key role in the regulation of the intracellular concentration of adenosylhomocysteine. This Bartonella henselae (strain ATCC 49882 / DSM 28221 / CCUG 30454 / Houston 1) (Rochalimaea henselae) protein is Adenosylhomocysteinase.